The primary structure comprises 485 residues: Alpha-amylase (485 aa).

Positions 1–18 are cleaved as a signal peptide; sequence MFLTSVLILCSLAALSLG. The residue at position 19 (Gln19) is a Pyrrolidone carboxylic acid. A disulfide bridge links Cys46 with Cys102. The Ca(2+) site is built by Asn116, Arg164, and Asp173. A disulfide bridge connects residues Cys152 and Cys166. A chloride-binding site is contributed by Arg201. Asp203 (nucleophile) is an active-site residue. His207 is a Ca(2+) binding site. Catalysis depends on Glu240, which acts as the Proton donor. 2 residues coordinate chloride: Asn303 and Arg339. The cysteines at positions 439 and 451 are disulfide-linked. A glycan (N-linked (GlcNAc...) asparagine) is linked at Asn448.

It belongs to the glycosyl hydrolase 13 family. Monomer. The cofactor is Ca(2+). Chloride serves as cofactor. Expressed in larval and adult gut.

It is found in the secreted. The catalysed reaction is Endohydrolysis of (1-&gt;4)-alpha-D-glucosidic linkages in polysaccharides containing three or more (1-&gt;4)-alpha-linked D-glucose units.. This chain is Alpha-amylase, found in Phaedon cochleariae (Mustard beetle).